We begin with the raw amino-acid sequence, 279 residues long: Phosphatidylglycerol--prolipoprotein diacylglyceryl transferase (279 aa).

A run of 7 helical transmembrane segments spans residues 22-42 (SAHW…WSSI), 58-78 (ILYF…VIFY), 89-109 (FIFK…GSII), 128-148 (FLVP…FING), 195-215 (ISQL…LNIF), 223-243 (GYMS…AEFF), and 256-276 (YISL…ILII). Arg-141 provides a ligand contact to a 1,2-diacyl-sn-glycero-3-phospho-(1'-sn-glycerol).

This sequence belongs to the Lgt family.

The protein localises to the cell membrane. It catalyses the reaction L-cysteinyl-[prolipoprotein] + a 1,2-diacyl-sn-glycero-3-phospho-(1'-sn-glycerol) = an S-1,2-diacyl-sn-glyceryl-L-cysteinyl-[prolipoprotein] + sn-glycerol 1-phosphate + H(+). The protein operates within protein modification; lipoprotein biosynthesis (diacylglyceryl transfer). In terms of biological role, catalyzes the transfer of the diacylglyceryl group from phosphatidylglycerol to the sulfhydryl group of the N-terminal cysteine of a prolipoprotein, the first step in the formation of mature lipoproteins. The polypeptide is Phosphatidylglycerol--prolipoprotein diacylglyceryl transferase (Wigglesworthia glossinidia brevipalpis).